Consider the following 194-residue polypeptide: Potassium-transporting ATPase KdpC subunit (194 aa).

The chain crosses the membrane as a helical span at residues 12–34; the sequence is LFLLLLTGGVYPLLTTALGQWWF.

The protein belongs to the KdpC family. In terms of assembly, the system is composed of three essential subunits: KdpA, KdpB and KdpC.

It localises to the cell inner membrane. In terms of biological role, part of the high-affinity ATP-driven potassium transport (or Kdp) system, which catalyzes the hydrolysis of ATP coupled with the electrogenic transport of potassium into the cytoplasm. This subunit acts as a catalytic chaperone that increases the ATP-binding affinity of the ATP-hydrolyzing subunit KdpB by the formation of a transient KdpB/KdpC/ATP ternary complex. The polypeptide is Potassium-transporting ATPase KdpC subunit (Salmonella enteritidis PT4 (strain P125109)).